Here is a 179-residue protein sequence, read N- to C-terminus: Large ribosomal subunit protein uL5 (179 aa).

The protein belongs to the universal ribosomal protein uL5 family. In terms of assembly, part of the 50S ribosomal subunit; part of the 5S rRNA/L5/L18/L25 subcomplex. Contacts the 5S rRNA and the P site tRNA. Forms a bridge to the 30S subunit in the 70S ribosome.

Its function is as follows. This is one of the proteins that bind and probably mediate the attachment of the 5S RNA into the large ribosomal subunit, where it forms part of the central protuberance. In the 70S ribosome it contacts protein S13 of the 30S subunit (bridge B1b), connecting the 2 subunits; this bridge is implicated in subunit movement. Contacts the P site tRNA; the 5S rRNA and some of its associated proteins might help stabilize positioning of ribosome-bound tRNAs. This chain is Large ribosomal subunit protein uL5, found in Shewanella baltica (strain OS223).